Here is a 445-residue protein sequence, read N- to C-terminus: Dolichyl-diphosphooligosaccharide--protein glycosyltransferase 48 kDa subunit (445 aa).

A signal peptide spans 1–20 (MRWLPGLLLIASIGFHQSLA). The Lumenal segment spans residues 21 to 405 (DRVLVLGETA…YERFIRSAYP (385 aa)). The helical transmembrane segment at 406–426 (YYASSFSMMAGLVLFSIVYLY) threads the bilayer. Topologically, residues 427-445 (HKDTPVKGAKVLDSEKKKN) are cytoplasmic.

It belongs to the DDOST 48 kDa subunit family. As to quaternary structure, component of the oligosaccharyltransferase (OST) complex.

The protein localises to the endoplasmic reticulum membrane. Its pathway is protein modification; protein glycosylation. Its function is as follows. Subunit of the oligosaccharyl transferase (OST) complex that catalyzes the initial transfer of a defined glycan (Glc(3)Man(9)GlcNAc(2) in eukaryotes) from the lipid carrier dolichol-pyrophosphate to an asparagine residue within an Asn-X-Ser/Thr consensus motif in nascent polypeptide chains, the first step in protein N-glycosylation. N-glycosylation occurs cotranslationally and the complex associates with the Sec61 complex at the channel-forming translocon complex that mediates protein translocation across the endoplasmic reticulum (ER). All subunits are required for a maximal enzyme activity. Required for the assembly of both SST3A- and SS3B-containing OST complexes. Required for normal lifespan. In Caenorhabditis elegans, this protein is Dolichyl-diphosphooligosaccharide--protein glycosyltransferase 48 kDa subunit.